The following is a 118-amino-acid chain: Large ribosomal subunit protein bL20 (118 aa).

Belongs to the bacterial ribosomal protein bL20 family.

In terms of biological role, binds directly to 23S ribosomal RNA and is necessary for the in vitro assembly process of the 50S ribosomal subunit. It is not involved in the protein synthesizing functions of that subunit. This is Large ribosomal subunit protein bL20 from Photorhabdus laumondii subsp. laumondii (strain DSM 15139 / CIP 105565 / TT01) (Photorhabdus luminescens subsp. laumondii).